The primary structure comprises 117 residues: Large ribosomal subunit protein bL20c (117 aa).

It belongs to the bacterial ribosomal protein bL20 family.

It is found in the plastid. The protein localises to the chloroplast. Functionally, binds directly to 23S ribosomal RNA and is necessary for the in vitro assembly process of the 50S ribosomal subunit. It is not involved in the protein synthesizing functions of that subunit. The sequence is that of Large ribosomal subunit protein bL20c (rpl20) from Bigelowiella natans (Pedinomonas minutissima).